A 357-amino-acid chain; its full sequence is 3-dehydroquinate synthase (357 aa).

NAD(+)-binding positions include 104 to 108 (GVVGD), 128 to 129 (TT), K141, and 168 to 171 (FLET). Zn(2+)-binding residues include E183, H243, and H260.

Belongs to the sugar phosphate cyclases superfamily. Dehydroquinate synthase family. NAD(+) is required as a cofactor. Co(2+) serves as cofactor. The cofactor is Zn(2+).

It localises to the cytoplasm. The catalysed reaction is 7-phospho-2-dehydro-3-deoxy-D-arabino-heptonate = 3-dehydroquinate + phosphate. The protein operates within metabolic intermediate biosynthesis; chorismate biosynthesis; chorismate from D-erythrose 4-phosphate and phosphoenolpyruvate: step 2/7. Its function is as follows. Catalyzes the conversion of 3-deoxy-D-arabino-heptulosonate 7-phosphate (DAHP) to dehydroquinate (DHQ). The sequence is that of 3-dehydroquinate synthase from Streptococcus pyogenes serotype M3 (strain ATCC BAA-595 / MGAS315).